The chain runs to 474 residues: tRNA-2-methylthio-N(6)-dimethylallyladenosine synthase (474 aa).

The 118-residue stretch at 3 to 120 folds into the MTTase N-terminal domain; the sequence is KKLHIKTWGC…LPEMIDQIRD (118 aa). [4Fe-4S] cluster-binding residues include Cys-12, Cys-49, Cys-83, Cys-157, Cys-161, and Cys-164. Positions 143–375 constitute a Radical SAM core domain; that stretch reads RADGPSAFVS…QDRITQQAMR (233 aa). The TRAM domain maps to 378-441; that stretch reads RQMLGTVQRI…TNSLRGTFVR (64 aa).

The protein belongs to the methylthiotransferase family. MiaB subfamily. Monomer. [4Fe-4S] cluster is required as a cofactor.

The protein localises to the cytoplasm. The catalysed reaction is N(6)-dimethylallyladenosine(37) in tRNA + (sulfur carrier)-SH + AH2 + 2 S-adenosyl-L-methionine = 2-methylsulfanyl-N(6)-dimethylallyladenosine(37) in tRNA + (sulfur carrier)-H + 5'-deoxyadenosine + L-methionine + A + S-adenosyl-L-homocysteine + 2 H(+). Functionally, catalyzes the methylthiolation of N6-(dimethylallyl)adenosine (i(6)A), leading to the formation of 2-methylthio-N6-(dimethylallyl)adenosine (ms(2)i(6)A) at position 37 in tRNAs that read codons beginning with uridine. This is tRNA-2-methylthio-N(6)-dimethylallyladenosine synthase from Shewanella sediminis (strain HAW-EB3).